A 271-amino-acid polypeptide reads, in one-letter code: ATP synthase subunit a (271 aa).

Helical transmembrane passes span 38–58 (FWTLNIDSMFFSVVLGLLFLV), 100–120 (LIAPLALTIFVWVFLMNLMDL), 146–166 (DVNITLSMALGVFILILFYSI), 220–240 (LIFILIAGLLPWWSQWILNVP), and 242–262 (AIFHILIITLQAFIFMVLTIV).

It belongs to the ATPase A chain family. In terms of assembly, F-type ATPases have 2 components, CF(1) - the catalytic core - and CF(0) - the membrane proton channel. CF(1) has five subunits: alpha(3), beta(3), gamma(1), delta(1), epsilon(1). CF(0) has three main subunits: a(1), b(2) and c(9-12). The alpha and beta chains form an alternating ring which encloses part of the gamma chain. CF(1) is attached to CF(0) by a central stalk formed by the gamma and epsilon chains, while a peripheral stalk is formed by the delta and b chains.

The protein resides in the cell inner membrane. Key component of the proton channel; it plays a direct role in the translocation of protons across the membrane. The sequence is that of ATP synthase subunit a from Salmonella arizonae (strain ATCC BAA-731 / CDC346-86 / RSK2980).